Consider the following 351-residue polypeptide: Probable dual-specificity RNA methyltransferase RlmN (351 aa).

Glu98 acts as the Proton acceptor in catalysis. The 229-residue stretch at 104–332 folds into the Radical SAM core domain; sequence TQKRLTVCVS…ASIRRSRGLD (229 aa). The cysteines at positions 111 and 337 are disulfide-linked. 3 residues coordinate [4Fe-4S] cluster: Cys118, Cys122, and Cys125. S-adenosyl-L-methionine-binding positions include 165-166, Ser195, 218-220, and Asn294; these read GE and SLH. The S-methylcysteine intermediate role is filled by Cys337.

This sequence belongs to the radical SAM superfamily. RlmN family. The cofactor is [4Fe-4S] cluster.

It is found in the cytoplasm. The enzyme catalyses adenosine(2503) in 23S rRNA + 2 reduced [2Fe-2S]-[ferredoxin] + 2 S-adenosyl-L-methionine = 2-methyladenosine(2503) in 23S rRNA + 5'-deoxyadenosine + L-methionine + 2 oxidized [2Fe-2S]-[ferredoxin] + S-adenosyl-L-homocysteine. It carries out the reaction adenosine(37) in tRNA + 2 reduced [2Fe-2S]-[ferredoxin] + 2 S-adenosyl-L-methionine = 2-methyladenosine(37) in tRNA + 5'-deoxyadenosine + L-methionine + 2 oxidized [2Fe-2S]-[ferredoxin] + S-adenosyl-L-homocysteine. Functionally, specifically methylates position 2 of adenine 2503 in 23S rRNA and position 2 of adenine 37 in tRNAs. In Acaryochloris marina (strain MBIC 11017), this protein is Probable dual-specificity RNA methyltransferase RlmN.